A 157-amino-acid chain; its full sequence is Endoribonuclease YbeY (157 aa).

His111, His115, and His121 together coordinate Zn(2+).

It belongs to the endoribonuclease YbeY family. The cofactor is Zn(2+).

Its subcellular location is the cytoplasm. Single strand-specific metallo-endoribonuclease involved in late-stage 70S ribosome quality control and in maturation of the 3' terminus of the 16S rRNA. The sequence is that of Endoribonuclease YbeY from Pseudomonas putida (strain W619).